Reading from the N-terminus, the 419-residue chain is Tyrosine--tRNA ligase 1 (419 aa).

Tyr-35 is a binding site for L-tyrosine. A 'HIGH' region motif is present at residues 40 to 49 (PTAGSLHIGH). Tyr-172 and Gln-176 together coordinate L-tyrosine. A 'KMSKS' region motif is present at residues 232 to 236 (KFGKT). Lys-235 is an ATP binding site. Residues 353–418 (QDLVELLIES…KKHFCLVKRA (66 aa)) enclose the S4 RNA-binding domain.

The protein belongs to the class-I aminoacyl-tRNA synthetase family. TyrS type 1 subfamily. As to quaternary structure, homodimer.

The protein resides in the cytoplasm. The catalysed reaction is tRNA(Tyr) + L-tyrosine + ATP = L-tyrosyl-tRNA(Tyr) + AMP + diphosphate + H(+). Catalyzes the attachment of tyrosine to tRNA(Tyr) in a two-step reaction: tyrosine is first activated by ATP to form Tyr-AMP and then transferred to the acceptor end of tRNA(Tyr). The chain is Tyrosine--tRNA ligase 1 from Vibrio parahaemolyticus serotype O3:K6 (strain RIMD 2210633).